Here is a 353-residue protein sequence, read N- to C-terminus: MSEQQYTLPDLLQNWPWNRHLSPYYEEAKRESSAWVESFKPFDQDGQRAFDAYLLASLTYSHGSREFVRLGCDLMNFYFVYDEYTDVSDSAVADRLANIVIDAMRNPENSSQSGDHLLGKMTKHFWTRALAMAPAGSPCFEHFITTSETYLRAVTQEAEDRANKRVRKVDDYLRLRRDTCGARPTLALIEFGLNLPNEVVRHPSLVALTEAAVDLIILVNDMHSYVRELSCGHENHNLITAIMLEHRLNRQDAFHWLGSHCSRVVDQFLSDLDELPSWGEPTDSGVRDYINGLGQWVRGNDDWSTESKRYYGEDGETIRQERLVTTRSGESNYIKFGQVGVQDSVRIQPIEAN.

Asp82, Asn220, Ser224, and Glu228 together coordinate Mg(2+). Positions Asp82–Asp86 match the DDXXD motif motif. Residues Arg309 and Tyr310 each coordinate (2E,6E)-farnesyl diphosphate.

It belongs to the terpene synthase family. Mg(2+) serves as cofactor.

The catalysed reaction is (2E,6E)-farnesyl diphosphate = gamma-muurolene + diphosphate. It catalyses the reaction (2E,6E)-farnesyl diphosphate = alpha-selinene + diphosphate. The enzyme catalyses (2E,6E)-farnesyl diphosphate = delta-cadinene + diphosphate. Functionally, terpene cyclase that catalyzes the cyclization of farnesyl diphosphate (FPP) to various sesquiterpenes, including beta-elemene, gamma-muurolene, alpha-selinene, beta-selinene, beta-cadinene, delta-cadinene and alpha-cadinol. The sequence is that of Sesquiterpene synthase Agr8 from Cyclocybe aegerita (Black poplar mushroom).